Reading from the N-terminus, the 221-residue chain is Iron-sulfur cluster repair protein YtfE (221 aa).

Belongs to the RIC family. YtfE subfamily. As to quaternary structure, homodimer.

The protein localises to the cytoplasm. Its function is as follows. Di-iron-containing protein involved in the repair of iron-sulfur clusters damaged by oxidative and nitrosative stress conditions. The sequence is that of Iron-sulfur cluster repair protein YtfE from Yersinia pseudotuberculosis serotype IB (strain PB1/+).